Here is a 122-residue protein sequence, read N- to C-terminus: Small ribosomal subunit protein uS12 (122 aa).

The interval 1 to 45 is disordered; it reads MPTTNQLVRKERKRQTKKTATPALQGSPQRRGVCTRVSTTTPKKP. A compositionally biased stretch (polar residues) spans 18-28; that stretch reads KTATPALQGSP. 3-methylthioaspartic acid is present on Asp-89.

This sequence belongs to the universal ribosomal protein uS12 family. In terms of assembly, part of the 30S ribosomal subunit. Contacts proteins S8 and S17. May interact with IF1 in the 30S initiation complex.

Its function is as follows. With S4 and S5 plays an important role in translational accuracy. In terms of biological role, interacts with and stabilizes bases of the 16S rRNA that are involved in tRNA selection in the A site and with the mRNA backbone. Located at the interface of the 30S and 50S subunits, it traverses the body of the 30S subunit contacting proteins on the other side and probably holding the rRNA structure together. The combined cluster of proteins S8, S12 and S17 appears to hold together the shoulder and platform of the 30S subunit. This Rubrobacter xylanophilus (strain DSM 9941 / JCM 11954 / NBRC 16129 / PRD-1) protein is Small ribosomal subunit protein uS12.